We begin with the raw amino-acid sequence, 206 residues long: Small ribosomal subunit protein uS2 (206 aa).

Belongs to the universal ribosomal protein uS2 family.

The chain is Small ribosomal subunit protein uS2 from Pyrobaculum neutrophilum (strain DSM 2338 / JCM 9278 / NBRC 100436 / V24Sta) (Thermoproteus neutrophilus).